The chain runs to 123 residues: uncharacterized protein (123 aa).

This is an uncharacterized protein from Acanthamoeba polyphaga mimivirus (APMV).